The sequence spans 462 residues: Argininosuccinate lyase (462 aa).

The protein belongs to the lyase 1 family. Argininosuccinate lyase subfamily.

Its subcellular location is the cytoplasm. It catalyses the reaction 2-(N(omega)-L-arginino)succinate = fumarate + L-arginine. It participates in amino-acid biosynthesis; L-arginine biosynthesis; L-arginine from L-ornithine and carbamoyl phosphate: step 3/3. This Lachnoclostridium phytofermentans (strain ATCC 700394 / DSM 18823 / ISDg) (Clostridium phytofermentans) protein is Argininosuccinate lyase.